A 527-amino-acid polypeptide reads, in one-letter code: Heat shock factor protein HSF8 (527 aa).

A DNA-binding region spans residues 39–133 (PFLVKTYDMV…KSISRRKPAH (95 aa)). 3 disordered regions span residues 128 to 158 (RRKP…HSAS), 241 to 273 (NESN…ADGQ), and 297 to 341 (SSPR…TSGK). The span at 134–152 (GHAQQQQQPHGNAQQQMQP) shows a compositional bias: low complexity. A compositionally biased stretch (polar residues) spans 317–326 (SPQSNASSGR).

This sequence belongs to the HSF family. Homotrimer. Post-translationally, exhibits temperature-dependent phosphorylation.

It localises to the nucleus. Its function is as follows. DNA-binding protein that specifically binds heat shock promoter elements (HSE) and activates transcription. This is Heat shock factor protein HSF8 (HSF8) from Solanum lycopersicum (Tomato).